The chain runs to 697 residues: Glycine--tRNA ligase beta subunit (697 aa).

The protein belongs to the class-II aminoacyl-tRNA synthetase family. As to quaternary structure, tetramer of two alpha and two beta subunits.

It is found in the cytoplasm. It carries out the reaction tRNA(Gly) + glycine + ATP = glycyl-tRNA(Gly) + AMP + diphosphate. This chain is Glycine--tRNA ligase beta subunit, found in Solidesulfovibrio magneticus (strain ATCC 700980 / DSM 13731 / RS-1) (Desulfovibrio magneticus).